Here is a 296-residue protein sequence, read N- to C-terminus: Lipoyl synthase (296 aa).

[4Fe-4S] cluster-binding residues include Cys-37, Cys-42, Cys-48, Cys-63, Cys-67, Cys-70, and Ser-276. The Radical SAM core domain maps to 49–265 (WSKKHTTVMI…ERVAKTKGFL (217 aa)).

It belongs to the radical SAM superfamily. Lipoyl synthase family. [4Fe-4S] cluster is required as a cofactor.

It localises to the cytoplasm. The catalysed reaction is [[Fe-S] cluster scaffold protein carrying a second [4Fe-4S](2+) cluster] + N(6)-octanoyl-L-lysyl-[protein] + 2 oxidized [2Fe-2S]-[ferredoxin] + 2 S-adenosyl-L-methionine + 4 H(+) = [[Fe-S] cluster scaffold protein] + N(6)-[(R)-dihydrolipoyl]-L-lysyl-[protein] + 4 Fe(3+) + 2 hydrogen sulfide + 2 5'-deoxyadenosine + 2 L-methionine + 2 reduced [2Fe-2S]-[ferredoxin]. Its pathway is protein modification; protein lipoylation via endogenous pathway; protein N(6)-(lipoyl)lysine from octanoyl-[acyl-carrier-protein]: step 2/2. Its function is as follows. Catalyzes the radical-mediated insertion of two sulfur atoms into the C-6 and C-8 positions of the octanoyl moiety bound to the lipoyl domains of lipoate-dependent enzymes, thereby converting the octanoylated domains into lipoylated derivatives. This Rickettsia conorii (strain ATCC VR-613 / Malish 7) protein is Lipoyl synthase.